Reading from the N-terminus, the 435-residue chain is Phospholipase A1 EG1, chloroplastic/mitochondrial (435 aa).

The N-terminal 31 residues, 1 to 31 (MTLPRQCAAACRTGGGGGGVVRCRAVAAAGG), are a transit peptide targeting the chloroplast and mitochondrion. The short motif at 264 to 268 (GHSMG) is the GXSXG element. Serine 266 acts as the Acyl-ester intermediate in catalysis. Residues aspartate 324 and histidine 371 each act as charge relay system in the active site.

Belongs to the AB hydrolase superfamily. Lipase family.

Its subcellular location is the mitochondrion. It localises to the plastid. The protein resides in the chloroplast. It carries out the reaction a 1,2-diacyl-sn-glycero-3-phosphocholine + H2O = a 2-acyl-sn-glycero-3-phosphocholine + a fatty acid + H(+). Functionally, phospholipase that releases free fatty acids from phospholipids. Catalyzes the initial step of jasmonate (JA) biosynthesis. Required for the biosynthesis of endogenous JA in seedling, inflorescence and spikelets. Not essential for JA biosynthesis after wounding. Mediates spikelet development and specification of empty-glume identity. Functions in a high temperature-dependent manner to maintain floral developmental robustness under heat stress conditions. Functions by safeguarding the expression of several floral identity genes, such as MADS1, MADS6 and G1. The protein is Phospholipase A1 EG1, chloroplastic/mitochondrial of Oryza sativa subsp. indica (Rice).